The following is a 504-amino-acid chain: Protein nucleotidyltransferase YdiU (504 aa).

Residues G99, G101, R102, K122, D134, G135, R185, and R192 each contribute to the ATP site. D261 functions as the Proton acceptor in the catalytic mechanism. The Mg(2+) site is built by N262 and D271. D271 lines the ATP pocket.

The protein belongs to the SELO family. Mg(2+) serves as cofactor. The cofactor is Mn(2+).

The enzyme catalyses L-seryl-[protein] + ATP = 3-O-(5'-adenylyl)-L-seryl-[protein] + diphosphate. The catalysed reaction is L-threonyl-[protein] + ATP = 3-O-(5'-adenylyl)-L-threonyl-[protein] + diphosphate. It catalyses the reaction L-tyrosyl-[protein] + ATP = O-(5'-adenylyl)-L-tyrosyl-[protein] + diphosphate. It carries out the reaction L-histidyl-[protein] + UTP = N(tele)-(5'-uridylyl)-L-histidyl-[protein] + diphosphate. The enzyme catalyses L-seryl-[protein] + UTP = O-(5'-uridylyl)-L-seryl-[protein] + diphosphate. The catalysed reaction is L-tyrosyl-[protein] + UTP = O-(5'-uridylyl)-L-tyrosyl-[protein] + diphosphate. Its function is as follows. Nucleotidyltransferase involved in the post-translational modification of proteins. It can catalyze the addition of adenosine monophosphate (AMP) or uridine monophosphate (UMP) to a protein, resulting in modifications known as AMPylation and UMPylation. This Methylococcus capsulatus (strain ATCC 33009 / NCIMB 11132 / Bath) protein is Protein nucleotidyltransferase YdiU.